Consider the following 161-residue polypeptide: Probable ubiquitin-conjugating enzyme E2 17 (161 aa).

A UBC core domain is found at 15–161 (IATNRLQKEF…TRWRFHDDKV (147 aa)). The active-site Glycyl thioester intermediate is cysteine 99.

This sequence belongs to the ubiquitin-conjugating enzyme family.

It carries out the reaction S-ubiquitinyl-[E1 ubiquitin-activating enzyme]-L-cysteine + [E2 ubiquitin-conjugating enzyme]-L-cysteine = [E1 ubiquitin-activating enzyme]-L-cysteine + S-ubiquitinyl-[E2 ubiquitin-conjugating enzyme]-L-cysteine.. It functions in the pathway protein modification; protein ubiquitination. Functionally, accepts the ubiquitin from the E1 complex and catalyzes its covalent attachment to other proteins. The polypeptide is Probable ubiquitin-conjugating enzyme E2 17 (UBC17) (Arabidopsis thaliana (Mouse-ear cress)).